Here is a 654-residue protein sequence, read N- to C-terminus: Import motor subunit, mitochondrial (654 aa).

Residues 1 to 23 (MLAAKNILNRSSLSSSFRIATRL) constitute a mitochondrion transit peptide. At Thr330 the chain carries Phosphothreonine. The interval 629 to 654 (EQLYKNDSNNNNNNNGNNAESGETKQ) is disordered. Positions 637-646 (NNNNNNNGNN) are enriched in low complexity.

The protein belongs to the heat shock protein 70 family. Component of the PAM complex, at least composed of SSC1 (mtHsp70), MGE1, TIM44, PAM16/TIM16, PAM17 and PAM18/TIM14. In the complex, SSC1 interacts directly with PAM18 and TIM44. Interacts with NAP1.

The protein localises to the mitochondrion matrix. It carries out the reaction ATP + H2O = ADP + phosphate + H(+). Its function is as follows. Essential component of the PAM complex, a complex required for the translocation of transit peptide-containing proteins from the inner membrane into the mitochondrial matrix in an ATP-dependent manner. Constitutes the ATP-driven core of the motor and binds the precursor preprotein. Required for the import of the processed frataxin homolog YFH1 into the mitochondrion. The protein is Import motor subunit, mitochondrial of Saccharomyces cerevisiae (strain ATCC 204508 / S288c) (Baker's yeast).